The primary structure comprises 442 residues: Hydroxycinnamoyltransferase 1 (442 aa).

Catalysis depends on proton acceptor residues His-159 and Asp-389.

The protein belongs to the plant acyltransferase family. As to expression, expressed in roots, leaves, stems and seeds.

Functionally, hydroxycinnamoyl transferase that catalyzes the transfer of an acyl from p-coumaryol-CoA to various acyl acceptors. Can use feruloyl-CoA and caffeoyl-CoA as acyl donors. This Oryza sativa subsp. japonica (Rice) protein is Hydroxycinnamoyltransferase 1.